The following is an 88-amino-acid chain: Translation initiation factor IF-1 2 (88 aa).

Residues 1–72 form the S1-like domain; sequence MAKEELIEMQ…TKGRITFRHL (72 aa).

This sequence belongs to the IF-1 family. Component of the 30S ribosomal translation pre-initiation complex which assembles on the 30S ribosome in the order IF-2 and IF-3, IF-1 and N-formylmethionyl-tRNA(fMet); mRNA recruitment can occur at any time during PIC assembly.

The protein resides in the cytoplasm. Its function is as follows. One of the essential components for the initiation of protein synthesis. Stabilizes the binding of IF-2 and IF-3 on the 30S subunit to which N-formylmethionyl-tRNA(fMet) subsequently binds. Helps modulate mRNA selection, yielding the 30S pre-initiation complex (PIC). Upon addition of the 50S ribosomal subunit IF-1, IF-2 and IF-3 are released leaving the mature 70S translation initiation complex. The polypeptide is Translation initiation factor IF-1 2 (Acidovorax sp. (strain JS42)).